A 297-amino-acid polypeptide reads, in one-letter code: Acetylglutamate kinase (297 aa).

Residues 72–73 (GG), arginine 94, and asparagine 187 contribute to the substrate site.

Belongs to the acetylglutamate kinase family. ArgB subfamily.

The protein localises to the cytoplasm. It catalyses the reaction N-acetyl-L-glutamate + ATP = N-acetyl-L-glutamyl 5-phosphate + ADP. It functions in the pathway amino-acid biosynthesis; L-arginine biosynthesis; N(2)-acetyl-L-ornithine from L-glutamate: step 2/4. Its function is as follows. Catalyzes the ATP-dependent phosphorylation of N-acetyl-L-glutamate. The polypeptide is Acetylglutamate kinase (Synechocystis sp. (strain ATCC 27184 / PCC 6803 / Kazusa)).